The sequence spans 372 residues: MTELKHTPLHATHRALNARMVDFGGWDMPVNYGSQIEEHRAVRTDAGMFDVSHMCVVDFTGERVRAFFERALANNVGKLQTAGKALYSCLLNPQGGVIDDLIVYYFGEDHFRVVVNAGTAEKDIAWFNKLNDEEGFGLTITPRRDYAIVAVQGPNAREKVWATVPHARAASEALKPFNAARVADTPFGELTVARTGYTGEDGFEIIVPAAHVEALWNALQAQGVRPAGLGARDTLRLEAGMNLYGQDMDDDVSPLDAGLAWTVDLSAPREFIGRAKLEADGSKQSFVGLILHKDNGKAAGVLRAHQKVVTPNGEGEITSGTFSPTMQESIAFARVPKGVQPGDVVHVQIRDKALPASVVKLPFVRNGKVLVG.

It belongs to the GcvT family. In terms of assembly, the glycine cleavage system is composed of four proteins: P, T, L and H.

The catalysed reaction is N(6)-[(R)-S(8)-aminomethyldihydrolipoyl]-L-lysyl-[protein] + (6S)-5,6,7,8-tetrahydrofolate = N(6)-[(R)-dihydrolipoyl]-L-lysyl-[protein] + (6R)-5,10-methylene-5,6,7,8-tetrahydrofolate + NH4(+). Its function is as follows. The glycine cleavage system catalyzes the degradation of glycine. The chain is Aminomethyltransferase from Paraburkholderia phymatum (strain DSM 17167 / CIP 108236 / LMG 21445 / STM815) (Burkholderia phymatum).